A 387-amino-acid chain; its full sequence is S-adenosylmethionine synthase (387 aa).

Histidine 15 contributes to the ATP binding site. Aspartate 17 serves as a coordination point for Mg(2+). Glutamate 43 contacts K(+). Residues glutamate 56 and glutamine 99 each coordinate L-methionine. The segment at 99 to 109 (QSPDIAQGVNR) is flexible loop. Residues 166-168 (DAK), 232-233 (RF), aspartate 241, 247-248 (RK), alanine 264, and lysine 268 contribute to the ATP site. Aspartate 241 serves as a coordination point for L-methionine. Lysine 272 contributes to the L-methionine binding site.

The protein belongs to the AdoMet synthase family. As to quaternary structure, homotetramer; dimer of dimers. Mg(2+) is required as a cofactor. Requires K(+) as cofactor.

Its subcellular location is the cytoplasm. It carries out the reaction L-methionine + ATP + H2O = S-adenosyl-L-methionine + phosphate + diphosphate. It functions in the pathway amino-acid biosynthesis; S-adenosyl-L-methionine biosynthesis; S-adenosyl-L-methionine from L-methionine: step 1/1. Its function is as follows. Catalyzes the formation of S-adenosylmethionine (AdoMet) from methionine and ATP. The overall synthetic reaction is composed of two sequential steps, AdoMet formation and the subsequent tripolyphosphate hydrolysis which occurs prior to release of AdoMet from the enzyme. This Nitrosomonas europaea (strain ATCC 19718 / CIP 103999 / KCTC 2705 / NBRC 14298) protein is S-adenosylmethionine synthase.